The chain runs to 468 residues: Adenosylhomocysteinase (468 aa).

Substrate contacts are provided by Thr-57, Asp-132, and Glu-194. 195-197 is a binding site for NAD(+); it reads TTT. Residues Lys-224 and Asp-228 each contribute to the substrate site. NAD(+)-binding positions include Asn-229, 258 to 263, Glu-281, Asn-316, 337 to 339, and Asn-382; these read GFGDVG and IGH.

It belongs to the adenosylhomocysteinase family. It depends on NAD(+) as a cofactor.

It localises to the cytoplasm. It catalyses the reaction S-adenosyl-L-homocysteine + H2O = L-homocysteine + adenosine. Its pathway is amino-acid biosynthesis; L-homocysteine biosynthesis; L-homocysteine from S-adenosyl-L-homocysteine: step 1/1. In terms of biological role, may play a key role in the regulation of the intracellular concentration of adenosylhomocysteine. The protein is Adenosylhomocysteinase of Methylorubrum extorquens (strain CM4 / NCIMB 13688) (Methylobacterium extorquens).